We begin with the raw amino-acid sequence, 187 residues long: dCTP deaminase (187 aa).

DCTP-binding positions include 110–115, 134–136, Q155, Y169, and Q179; these read KSTYAR and TLE. The active-site Proton donor/acceptor is the E136.

This sequence belongs to the dCTP deaminase family. In terms of assembly, homotrimer.

The enzyme catalyses dCTP + H2O + H(+) = dUTP + NH4(+). It functions in the pathway pyrimidine metabolism; dUMP biosynthesis; dUMP from dCTP (dUTP route): step 1/2. Functionally, catalyzes the deamination of dCTP to dUTP. In Bordetella petrii (strain ATCC BAA-461 / DSM 12804 / CCUG 43448), this protein is dCTP deaminase.